Here is a 195-residue protein sequence, read N- to C-terminus: MYRIVLGKVSTLSAAPLPPGLREQAPQGPRRERWLAGRALLSHTLSPLPEIIYGEQGKPAFAPEMPLWFNLSHSGDDIALLLSDEGEVGCDIEVIRPRANWRWLANAVFSLGEHAEMDAVHPDQQLEMFWRIWTRKEAIVKQRGGSAWQIVSVDSTYHSSLSVSHCQLENLSLAICTPTPFTLTADSVQWIDSVN.

This sequence belongs to the P-Pant transferase superfamily. Gsp/Sfp/HetI/AcpT family.

The catalysed reaction is apo-[ACP] + CoA = holo-[ACP] + adenosine 3',5'-bisphosphate + H(+). Its function is as follows. May be involved in an alternative pathway for phosphopantetheinyl transfer and holo-ACP synthesis in E.coli. The native apo-protein substrate is unknown. Is able to functionally replace AcpS in vivo but only when expressed at high levels. The chain is 4'-phosphopantetheinyl transferase AcpT from Escherichia coli (strain K12).